A 92-amino-acid polypeptide reads, in one-letter code: Auxin-responsive protein SAUR28 (92 aa).

It belongs to the ARG7 family. In terms of tissue distribution, higher expression in thermo-responsive cultivars (e.g. cv. Alst-1, cv. Ang-0 and cv. Com-0) than in low thermo-responsive cultivars (e.g. cv. Dja-1, cv. El-0 and cv. Kon).

The protein localises to the cell membrane. Its function is as follows. Functions as a positive effector of cell expansion through modulation of auxin transport. Involved in thermo-responsiveness of plant architecture. Enhances plasma membrane H(+)-ATPase. The chain is Auxin-responsive protein SAUR28 from Arabidopsis thaliana (Mouse-ear cress).